Here is a 339-residue protein sequence, read N- to C-terminus: Phenylalanine--tRNA ligase alpha subunit (339 aa).

Glu254 is a Mg(2+) binding site.

Belongs to the class-II aminoacyl-tRNA synthetase family. Phe-tRNA synthetase alpha subunit type 1 subfamily. In terms of assembly, tetramer of two alpha and two beta subunits. Mg(2+) serves as cofactor.

It is found in the cytoplasm. It carries out the reaction tRNA(Phe) + L-phenylalanine + ATP = L-phenylalanyl-tRNA(Phe) + AMP + diphosphate + H(+). This chain is Phenylalanine--tRNA ligase alpha subunit, found in Clostridium botulinum (strain Langeland / NCTC 10281 / Type F).